A 33-amino-acid chain; its full sequence is Pardaxin P-1 (33 aa).

It belongs to the pardaxin family. In terms of assembly, in aqueous solution exists as a tetramer.

Its subcellular location is the secreted. It is found in the target cell membrane. Functionally, exhibits unusual shark repellent and surfactant properties. Forms voltage-dependent, ion-permeable channels in membranes. At high concentration causes cell membrane lysis. Causes death in killfish oryzias latipes in 30 minutes at a concentration of 25 micrograms/ml. This is Pardaxin P-1 from Pardachirus pavoninus (Peacock sole).